Consider the following 307-residue polypeptide: Methionyl-tRNA formyltransferase (307 aa).

Residue 109-112 coordinates (6S)-5,6,7,8-tetrahydrofolate; it reads SLLP.

This sequence belongs to the Fmt family.

It carries out the reaction L-methionyl-tRNA(fMet) + (6R)-10-formyltetrahydrofolate = N-formyl-L-methionyl-tRNA(fMet) + (6S)-5,6,7,8-tetrahydrofolate + H(+). In terms of biological role, attaches a formyl group to the free amino group of methionyl-tRNA(fMet). The formyl group appears to play a dual role in the initiator identity of N-formylmethionyl-tRNA by promoting its recognition by IF2 and preventing the misappropriation of this tRNA by the elongation apparatus. In Dechloromonas aromatica (strain RCB), this protein is Methionyl-tRNA formyltransferase.